Reading from the N-terminus, the 360-residue chain is Phosphoserine aminotransferase (360 aa).

Arg-42 serves as a coordination point for L-glutamate. Pyridoxal 5'-phosphate contacts are provided by residues 76 to 77, Trp-102, Thr-152, Asp-172, and Gln-195; that span reads AS. Position 196 is an N6-(pyridoxal phosphate)lysine (Lys-196). Residue 237–238 coordinates pyridoxal 5'-phosphate; the sequence is NT.

It belongs to the class-V pyridoxal-phosphate-dependent aminotransferase family. SerC subfamily. Homodimer. Requires pyridoxal 5'-phosphate as cofactor.

Its subcellular location is the cytoplasm. The enzyme catalyses O-phospho-L-serine + 2-oxoglutarate = 3-phosphooxypyruvate + L-glutamate. It catalyses the reaction 4-(phosphooxy)-L-threonine + 2-oxoglutarate = (R)-3-hydroxy-2-oxo-4-phosphooxybutanoate + L-glutamate. The protein operates within amino-acid biosynthesis; L-serine biosynthesis; L-serine from 3-phospho-D-glycerate: step 2/3. Its function is as follows. Catalyzes the reversible conversion of 3-phosphohydroxypyruvate to phosphoserine and of 3-hydroxy-2-oxo-4-phosphonooxybutanoate to phosphohydroxythreonine. This is Phosphoserine aminotransferase from Bacillus cereus (strain ZK / E33L).